The sequence spans 177 residues: Apoptosis regulatory protein Siva (177 aa).

Tyr-34 is subject to Phosphotyrosine; by ABL2. Residues 36 to 55 (REVFERTKQLLFQGAQAYRD) are interaction with BCL2L1 isoform Bcl-x(L) and inhibition of BCL2L1 anti-apoptotic activity.

As to quaternary structure, binds through its N-terminal region to the C-terminus of CD27 and to PXMP2/PMP22. Binds to the C-terminus of TNFRSF18/GITR. Binds to BCL2L1/BCLX isoform Bcl-x(L) but not to BAX. It depends on Zn(2+) as a cofactor. In post-ischemic kidney, found in cells lining the S3 segment of proximal tubules at 12 hours and 1 day post-ischemia. At five and seven days post-ischemia, found in epithelial cells of papillary proliferations in regenerating tubules.

It is found in the cytoplasm. The protein localises to the nucleus. Its function is as follows. Induces CD27-mediated apoptosis. Inhibits BCL2L1 isoform Bcl-x(L) anti-apoptotic activity. Inhibits activation of NF-kappa-B and promotes T-cell receptor-mediated apoptosis. The polypeptide is Apoptosis regulatory protein Siva (Siva1) (Rattus norvegicus (Rat)).